The sequence spans 210 residues: Imidazole glycerol phosphate synthase subunit HisH (210 aa).

Residues 7–210 (KVVIIDTGCA…SQLIKNFLEM (204 aa)) enclose the Glutamine amidotransferase type-1 domain. Cys82 acts as the Nucleophile in catalysis. Residues His192 and Glu194 contribute to the active site.

In terms of assembly, heterodimer of HisH and HisF.

The protein localises to the cytoplasm. It carries out the reaction 5-[(5-phospho-1-deoxy-D-ribulos-1-ylimino)methylamino]-1-(5-phospho-beta-D-ribosyl)imidazole-4-carboxamide + L-glutamine = D-erythro-1-(imidazol-4-yl)glycerol 3-phosphate + 5-amino-1-(5-phospho-beta-D-ribosyl)imidazole-4-carboxamide + L-glutamate + H(+). It catalyses the reaction L-glutamine + H2O = L-glutamate + NH4(+). Its pathway is amino-acid biosynthesis; L-histidine biosynthesis; L-histidine from 5-phospho-alpha-D-ribose 1-diphosphate: step 5/9. In terms of biological role, IGPS catalyzes the conversion of PRFAR and glutamine to IGP, AICAR and glutamate. The HisH subunit catalyzes the hydrolysis of glutamine to glutamate and ammonia as part of the synthesis of IGP and AICAR. The resulting ammonia molecule is channeled to the active site of HisF. The sequence is that of Imidazole glycerol phosphate synthase subunit HisH from Photobacterium profundum (strain SS9).